A 663-amino-acid polypeptide reads, in one-letter code: MLQMPKLNEIPPGRAGRREARGEGRWPGQTGPEAARLEWRAQGQAGGARAPWDSWGSSRLPTQPGPGWSRCPPSLLCALSFQKSTMESKDEVSDTDSGIILQSGPDSPVSPMKELTHAVHKQQRALEARLEACLEELRRLCLREAELTGTLPAEYPLKPGEKAPKVRRRIGAAYKLDDWALHREDPLSSLERQLALQLQITEAARRLCLEENLSRQARRQRKHSMLQEEKKLQELQRCLVERRRNSEPPPAAALPLGRELSASDDSSLSDGLLLEEEESQVPKPPPESPAPPSRPLPPQTLEGLQPTGPEAGSPERAPVQNSPWKETSLDHPYEKPRKSSEPWSESSSPATTPQDGPSASSLWLLEPASYHVVPIRGVPGQWQGRTSAPATPEIQGRRGQSQSLRVDSFRAGPEGRGRSAFPRRRPTHYTVTVPDSCFPATKPPLPHAACHSCSEDSGSDVSSISHPTSPGSSSPDISFLQPLSPPKTHRHRGAWVPAGSRELVAHHPKLLLPPGYFPAGRYVVVAESPLPPGEWELRRAAPGPAYEEEGTPLRYQRLVPSRSRIVRTPSLKDSPAGRGLSKAAVSEELKWWHERARLRSTRPHSLDRQGAFRVRSLPLGREGFGRALGPRAQVPTVCVLRRSPDGAPVQVFVPEKGEIISQV.

The segment at 1 to 68 (MLQMPKLNEI…RLPTQPGPGW (68 aa)) is disordered. Low complexity predominate over residues 40 to 50 (RAQGQAGGARA). A coiled-coil region spans residues 118 to 147 (AVHKQQRALEARLEACLEELRRLCLREAEL). The short motif at 164–170 (PKVRRRI) is the Nuclear localization signal (NLS) 1 element. 3 disordered regions span residues 242–362 (RRRN…ASSL), 378–425 (VPGQ…PRRR), and 444–493 (PLPH…RHRG). Residues 259-272 (ELSASDDSSLSDGL) are compositionally biased toward low complexity. Residues 282 to 298 (PKPPPESPAPPSRPLPP) are compositionally biased toward pro residues. Basic and acidic residues predominate over residues 327 to 340 (TSLDHPYEKPRKSS). The Nuclear localization signal (NLS) 2 signature appears at 332 to 338 (PYEKPRK). Positions 350–361 (ATTPQDGPSASS) are enriched in polar residues. A Nuclear localization signal (NLS) 3 motif is present at residues 422 to 428 (PRRRPTH). Residues 455 to 475 (EDSGSDVSSISHPTSPGSSSP) are compositionally biased toward low complexity.

In terms of assembly, interacts with IRAK1, NOD2 and RIPK2; the interaction takes place upon PRR stimulation. Interacts with YWHAQ/14-3-3T; the interaction increases upon PRR stimulation and is required for cellular signaling pathway activation and cytokine secretion. Interacts (via N-terminal domain) with CYTH1 and CYTH2 (via their N-terminal domains). Interacts with FBXW11 and BTRC; associates with SCF E3 ubiquitin-protein ligase complexes. As to expression, highly expressed in intestinal myeloid-derived cells and expressed in monocyte-derived macrophages upon induction by PRR activation.

The protein resides in the nucleus. It is found in the cytoplasm. Its function is as follows. Expressed in peripheral macrophages and intestinal myeloid-derived cells, is required for optimal PRR (pattern recognition receptor)-induced signaling, cytokine secretion, and bacterial clearance. Upon stimulation of a broad range of PRRs (pattern recognition receptor) such as NOD2 or TLR2, TLR3, TLR4, TLR5, TLR7 and TLR9, associates with YWHAQ/14-3-3T, which in turn leads to the recruitment and activation of MAP kinases and NF-kappa-B signaling complexes that amplifies PRR-induced downstream signals and cytokine secretion. In the intestine, regulates adherens junction stability by regulating the degradation of CYTH1 and CYTH2, probably acting as substrate cofactor for SCF E3 ubiquitin-protein ligase complexes. Stabilizes adherens junctions by limiting CYTH1-dependent ARF6 activation. The protein is Innate immunity activator protein of Homo sapiens (Human).